A 492-amino-acid polypeptide reads, in one-letter code: Glutamyl-tRNA(Gln) amidotransferase subunit A, mitochondrial (492 aa).

Residues Lys78 and Ser159 each act as charge relay system in the active site. Ser183 serves as the catalytic Acyl-ester intermediate.

This sequence belongs to the amidase family. GatA subfamily. Subunit of the heterotrimeric GatCAB amidotransferase (AdT) complex, composed of A, B and C subunits.

The protein localises to the mitochondrion. The catalysed reaction is L-glutamyl-tRNA(Gln) + L-glutamine + ATP + H2O = L-glutaminyl-tRNA(Gln) + L-glutamate + ADP + phosphate + H(+). Functionally, allows the formation of correctly charged Gln-tRNA(Gln) through the transamidation of misacylated Glu-tRNA(Gln) in the mitochondria. The reaction takes place in the presence of glutamine and ATP through an activated gamma-phospho-Glu-tRNA(Gln). The chain is Glutamyl-tRNA(Gln) amidotransferase subunit A, mitochondrial from Anopheles gambiae (African malaria mosquito).